Here is a 331-residue protein sequence, read N- to C-terminus: 2-oxoglutarate-dependent dioxygenase (331 aa).

In terms of domain architecture, Fe2OG dioxygenase spans 186–292; that stretch reads PACPLRLLHY…RYSVVFFMDG (107 aa). Fe cation contacts are provided by His214, Asp216, and His272. Arg283 contributes to the 2-oxoglutarate binding site.

It belongs to the iron/ascorbate-dependent oxidoreductase family. It depends on Fe(2+) as a cofactor.

It functions in the pathway mycotoxin biosynthesis. Functionally, 2-oxoglutarate-dependent dioxygenase; part of the gene cluster that mediates the biosynthesis of the selective antifungal agent ascochitine, an o-quinone methide that plays a possible protective role against other microbial competitors in nature and is considered to be important for pathogenicity of legume-associated Didymella species. The pathway probably begins with the synthesis of a keto-aldehyde intermediate by the ascochitine non-reducing polyketide synthase pksAC from successive condensations of 4 malonyl-CoA units, presumably with a simple acetyl-CoA starter unit. Release of the keto-aldehyde intermediate is consistent with the presence of the C-terminal reductive release domain. The HR-PKS (orf7) probably makes a diketide starter unit which is passed to the non-reducing polyketide synthase pksAC for further extension, producing ascochital and ascochitine. The aldehyde dehydrogenase (orf1), the 2-oxoglutarate-dependent dioxygenase (orf3) and the dehydrogenase (orf9) are probably involved in subsequent oxidations of methyl groups to the carboxylic acid of the heterocyclic ring. The ascochitine gene cluster also includes a gene encoding a short peptide with a cupin domain (orf2) that is often found in secondary metabolite gene clusters and which function has still to be determined. This chain is 2-oxoglutarate-dependent dioxygenase, found in Didymella fabae (Leaf and pod spot disease fungus).